Here is an 81-residue protein sequence, read N- to C-terminus: uncharacterized protein (81 aa).

This is an uncharacterized protein from Autographa californica nuclear polyhedrosis virus (AcMNPV).